We begin with the raw amino-acid sequence, 118 residues long: 5-hydroxyisourate hydrolase (118 aa).

Residues histidine 11, arginine 51, and tyrosine 115 each coordinate substrate.

This sequence belongs to the transthyretin family. 5-hydroxyisourate hydrolase subfamily. As to quaternary structure, homotetramer.

The protein resides in the peroxisome. It carries out the reaction 5-hydroxyisourate + H2O = 5-hydroxy-2-oxo-4-ureido-2,5-dihydro-1H-imidazole-5-carboxylate + H(+). Its pathway is purine metabolism; urate degradation; (S)-allantoin from urate: step 2/3. Its function is as follows. Catalyzes the hydrolysis of 5-hydroxyisourate (HIU) to 2-oxo-4-hydroxy-4-carboxy-5-ureidoimidazoline (OHCU). The polypeptide is 5-hydroxyisourate hydrolase (Urah) (Mus musculus (Mouse)).